Here is an 826-residue protein sequence, read N- to C-terminus: Putative ankyrin repeat protein RBE_0220 (826 aa).

ANK repeat units follow at residues 308–337, 342–371, 375–404, 445–474, 478–507, 512–541, 545–574, and 578–607; these read LGTSLLAVTVRNNNVELTKALLNKGADQHA, IDMSLLYIACLNKSVDIAKLLLEYNVDPNY, DNDTPLLQACEKKSPELVKALLAKNADPNK, NDFTPLILACYNNSERVVQALLDKEADVNA, DGFTPLFAAYRNHSTKITELLLEKGANPDV, TKSSILYNACNEGDLNIIKLLLKHKANPNL, DGTTPLMAACEKGDLEIAALLLKNGADINK, and NGDNALFLACKNGNLELVKMLVENGVDLKK.

The sequence is that of Putative ankyrin repeat protein RBE_0220 from Rickettsia bellii (strain RML369-C).